A 158-amino-acid chain; its full sequence is MRAATPLQTVDRPKDWYKTMFKQIHMVHKPDDDTDMYNTPYTYNAGLYNSPYSAQSHPAAKTQTYRPLSKSHSDNGTDAFKDASSPVPPPHVPPPVPPLRPRDRSSTEKHDWDPPDRKVDTRKFRSEPRSIFEYEPGKSSILQHERPVTKPQAGRRKV.

One can recognise a SoHo domain in the interval 1–46 (MRAATPLQTVDRPKDWYKTMFKQIHMVHKPDDDTDMYNTPYTYNAG). The segment at 28-158 (HKPDDDTDMY…TKPQAGRRKV (131 aa)) is disordered. The segment covering 50–66 (SPYSAQSHPAAKTQTYR) has biased composition (polar residues). The span at 71–81 (SHSDNGTDAFK) shows a compositional bias: basic and acidic residues. The residue at position 73 (Ser73) is a Phosphoserine. The segment covering 86 to 99 (PVPPPHVPPPVPPL) has biased composition (pro residues). The span at 100 to 136 (RPRDRSSTEKHDWDPPDRKVDTRKFRSEPRSIFEYEP) shows a compositional bias: basic and acidic residues. Ala153 is modified (alanine amide).

In terms of assembly, interacts with ABL1/c-Abl, ABL2/v-Abl/Arg, ACTN, AKT1, CBL, PALLD and PAK1. Interacts with ABL, CBL, DNM1, DNM2, FLOT1, AFDN, PTK2B/PYK2, SAPAP, SPTAN1, SYNJ1, SYNJ2, VCL/vinculin, and WASF. Interacts with PTPN12 and WASF1 via its SH3 domains; this interaction may mediate the partial PTPN12 and WASF1 translocation to focal adhesion sites. In terms of processing, ubiquitinated by CBL. Dephosphorylated by PTPN12. Expressed in duodenum.

It localises to the cytoplasm. The protein localises to the perinuclear region. Its subcellular location is the apical cell membrane. It is found in the cell junction. The protein resides in the focal adhesion. It localises to the cell projection. The protein localises to the lamellipodium. Its function is as follows. Adapter protein that plays a role in the assembling of signaling complexes, being a link between ABL kinases and actin cytoskeleton. Can form complex with ABL1 and CBL, thus promoting ubiquitination and degradation of ABL1 or with AKT1 and PAK1, thus mediating AKT1-mediated activation of PAK1. May play a role in the regulation of pancreatic cell adhesion, possibly by acting on WASF1 phosphorylation, enhancing phosphorylation by ABL1, as well as dephosphorylation by PTPN12. Increases water and sodium absorption in the intestine and gall-bladder. The chain is Sorbin and SH3 domain-containing protein 2 (SORBS2) from Sus scrofa (Pig).